The following is a 118-amino-acid chain: Protein TusC (118 aa).

The protein belongs to the DsrF/TusC family. As to quaternary structure, heterohexamer, formed by a dimer of trimers. The hexameric TusBCD complex contains 2 copies each of TusB, TusC and TusD. The TusBCD complex interacts with TusE.

The protein resides in the cytoplasm. Its function is as follows. Part of a sulfur-relay system required for 2-thiolation of 5-methylaminomethyl-2-thiouridine (mnm(5)s(2)U) at tRNA wobble positions. The protein is Protein TusC of Salmonella agona (strain SL483).